Consider the following 361-residue polypeptide: Aurora kinase B-A (361 aa).

In terms of domain architecture, Protein kinase spans 93-343; the sequence is FDIGRPLGKG…LKGVMEHPWV (251 aa). ATP is bound by residues 99–107 and Lys122; that span reads LGKGKFGNV. Residue Asp216 is the Proton acceptor of the active site.

This sequence belongs to the protein kinase superfamily. Ser/Thr protein kinase family. Aurora subfamily. As to quaternary structure, component of the CPC at least composed of survivin/birc5, incenp, cdca8/borealin and/or cdca9/dasra-A, and aurkb/aurora-B. Interacts directly (via N-terminus and kinase domain) with incenp (via C terminus), and may weakly interact (via N-terminus) with birc5.1 to stabilize the complex. Interacts with mtus1. Mg(2+) is required as a cofactor. Phosphorylated, stimulates kinase activity.

The protein resides in the nucleus. It localises to the chromosome. It carries out the reaction L-seryl-[protein] + ATP = O-phospho-L-seryl-[protein] + ADP + H(+). The enzyme catalyses L-threonyl-[protein] + ATP = O-phospho-L-threonyl-[protein] + ADP + H(+). Its activity is regulated as follows. Kinase activity is stimulated by both birc5/survivin-binding and cell-cycle specific phosphorylation. Functionally, serine/threonine-protein kinase component of the chromosomal passenger complex (CPC), a complex that acts as a key regulator of mitosis. The CPC complex has essential functions at the centromere in ensuring correct chromosome alignment and segregation and is required for chromatin-induced microtubule stabilization and spindle assembly. Involved in the bipolar attachment of spindle microtubules to kinetochores and is a key regulator for the onset of cytokinesis during mitosis. Required for central/midzone spindle assembly and cleavage furrow formation. Key component of the cytokinesis checkpoint, a process required to delay abscission to prevent both premature resolution of intercellular chromosome bridges and accumulation of DNA damage. Phosphorylates 'Ser-10' of histone H3 during mitosis. This chain is Aurora kinase B-A (aurkb-a), found in Xenopus laevis (African clawed frog).